The primary structure comprises 389 residues: Succinate--CoA ligase [ADP-forming] subunit beta (389 aa).

ATP-binding positions include Lys46, 53 to 55, Glu99, Cys102, and Glu107; that span reads GRG. Mg(2+) is bound by residues Asn199 and Asp213. Substrate-binding positions include Asn264 and 321–323; that span reads GIV.

The protein belongs to the succinate/malate CoA ligase beta subunit family. Heterotetramer of two alpha and two beta subunits. Mg(2+) serves as cofactor.

The enzyme catalyses succinate + ATP + CoA = succinyl-CoA + ADP + phosphate. It carries out the reaction GTP + succinate + CoA = succinyl-CoA + GDP + phosphate. It functions in the pathway carbohydrate metabolism; tricarboxylic acid cycle; succinate from succinyl-CoA (ligase route): step 1/1. Succinyl-CoA synthetase functions in the citric acid cycle (TCA), coupling the hydrolysis of succinyl-CoA to the synthesis of either ATP or GTP and thus represents the only step of substrate-level phosphorylation in the TCA. The beta subunit provides nucleotide specificity of the enzyme and binds the substrate succinate, while the binding sites for coenzyme A and phosphate are found in the alpha subunit. The sequence is that of Succinate--CoA ligase [ADP-forming] subunit beta from Haemophilus influenzae (strain PittEE).